Reading from the N-terminus, the 871-residue chain is Serrate RNA effector molecule homolog (871 aa).

The interval 1–90 (MGDSDDEYDR…RRDWDGHSSD (90 aa)) is disordered. At Gly-2 the chain carries N-acetylglycine. Phosphoserine is present on Ser-4. Position 8 is a phosphotyrosine (Tyr-8). A compositionally biased stretch (basic and acidic residues) spans 8 to 73 (YDRRRRDKFR…ERFSPPRHEL (66 aa)). Phosphoserine occurs at positions 67, 74, and 136. Lys-150 is covalently cross-linked (Glycyl lysine isopeptide (Lys-Gly) (interchain with G-Cter in SUMO2)). Positions 272 to 411 (EEEEQAGKPG…KPKDAAGLEC (140 aa)) are disordered. Positions 297 to 347 (DGERKTNDKDEKKEDSKQAENDSSNDDKTKKSEGDGDKEEKKEDSEKEAKK) are enriched in basic and acidic residues. The span at 370–385 (SESESESGQAEEEKEE) shows a compositional bias: acidic residues. The segment covering 386-411 (AEALKEKEKPKEEEWEKPKDAAGLEC) has biased composition (basic and acidic residues). Residues Ser-492 and Ser-539 each carry the phosphoserine modification. Residue Thr-543 is modified to Phosphothreonine. Phosphoserine is present on Ser-569. Residues 574 to 597 (ELLGSSGGAPPEEPPKEGNPAEIN) are disordered. Phosphothreonine is present on Thr-670. Position 678 is a phosphoserine (Ser-678). Residues Arg-828, Arg-835, and Arg-845 each carry the omega-N-methylarginine modification. A disordered region spans residues 830–849 (NYDAFRGQGGYPGKPRNRMV).

This sequence belongs to the ARS2 family. As to quaternary structure, interacts with CASP8AP2, ERBB4, NCBP1/CBP80 and DROSHA. Interacts with LUZP4. Interacts with NCBP2/CBP20 and NCBP3. Interacts with MTREX.

Its subcellular location is the nucleus. The protein localises to the nucleoplasm. It localises to the cytoplasm. Functionally, acts as a mediator between the cap-binding complex (CBC) and the primary microRNAs (miRNAs) processing machinery during cell proliferation. Contributes to the stability and delivery of capped primary miRNA transcripts to the primary miRNA processing complex containing DGCR8 and DROSHA, thereby playing a role in RNA-mediated gene silencing (RNAi) by miRNAs. Binds capped RNAs (m7GpppG-capped RNA); however interaction is probably mediated via its interaction with NCBP1/CBP80 component of the CBC complex. Involved in cell cycle progression at S phase. Does not directly confer arsenite resistance but rather modulates arsenic sensitivity. Independently of its activity on miRNAs, necessary and sufficient to promote neural stem cell self-renewal. Does so by directly binding SOX2 promoter and positively regulating its transcription. The sequence is that of Serrate RNA effector molecule homolog (SRRT) from Pongo abelii (Sumatran orangutan).